Consider the following 246-residue polypeptide: DNA repair protein RecO (246 aa).

The protein belongs to the RecO family.

In terms of biological role, involved in DNA repair and RecF pathway recombination. The polypeptide is DNA repair protein RecO (Bifidobacterium adolescentis (strain ATCC 15703 / DSM 20083 / NCTC 11814 / E194a)).